Here is a 253-residue protein sequence, read N- to C-terminus: Mitochondrial inner membrane protease ATP23 (253 aa).

Positions 1-23 (MSKNADLEAIPAAEEIKKPNPPK) are disordered. Residues 14 to 23 (EEIKKPNPPK) show a composition bias toward basic and acidic residues. Histidine 152 contributes to the a divalent metal cation binding site. Residue glutamate 153 is part of the active site. Histidine 156 serves as a coordination point for a divalent metal cation.

It belongs to the peptidase M76 family.

Its subcellular location is the mitochondrion inner membrane. In terms of biological role, has a dual role in the assembly of mitochondrial ATPase. Acts as a protease that removes N-terminal residues of mitochondrial ATPase CF(0) subunit 6 at the intermembrane space side. Also involved in the correct assembly of the membrane-embedded ATPase CF(0) particle, probably mediating association of subunit 6 with the subunit 9 ring. This is Mitochondrial inner membrane protease ATP23 (ATP23) from Vanderwaltozyma polyspora (strain ATCC 22028 / DSM 70294 / BCRC 21397 / CBS 2163 / NBRC 10782 / NRRL Y-8283 / UCD 57-17) (Kluyveromyces polysporus).